A 189-amino-acid chain; its full sequence is Pyridoxal 5'-phosphate synthase subunit PdxT (189 aa).

46–48 (GES) lines the L-glutamine pocket. Cys78 functions as the Nucleophile in the catalytic mechanism. Residues Arg107 and 136–137 (IR) contribute to the L-glutamine site. Active-site charge relay system residues include His173 and Glu175.

This sequence belongs to the glutaminase PdxT/SNO family. As to quaternary structure, in the presence of PdxS, forms a dodecamer of heterodimers. Only shows activity in the heterodimer.

The catalysed reaction is aldehydo-D-ribose 5-phosphate + D-glyceraldehyde 3-phosphate + L-glutamine = pyridoxal 5'-phosphate + L-glutamate + phosphate + 3 H2O + H(+). It catalyses the reaction L-glutamine + H2O = L-glutamate + NH4(+). Its pathway is cofactor biosynthesis; pyridoxal 5'-phosphate biosynthesis. Catalyzes the hydrolysis of glutamine to glutamate and ammonia as part of the biosynthesis of pyridoxal 5'-phosphate. The resulting ammonia molecule is channeled to the active site of PdxS. This Roseiflexus sp. (strain RS-1) protein is Pyridoxal 5'-phosphate synthase subunit PdxT.